The following is a 171-amino-acid chain: Ribosome maturation factor RimM (171 aa).

One can recognise a PRC barrel domain in the interval 96 to 170 (AEGEYYYHEI…LVTIHVMEGL (75 aa)).

It belongs to the RimM family. As to quaternary structure, binds ribosomal protein uS19.

The protein localises to the cytoplasm. Its function is as follows. An accessory protein needed during the final step in the assembly of 30S ribosomal subunit, possibly for assembly of the head region. Essential for efficient processing of 16S rRNA. May be needed both before and after RbfA during the maturation of 16S rRNA. It has affinity for free ribosomal 30S subunits but not for 70S ribosomes. The protein is Ribosome maturation factor RimM of Bacillus cereus (strain G9842).